The chain runs to 396 residues: GTPase Obg (396 aa).

The 159-residue stretch at 1-159 (MKFVDEASIY…RTLKLEMKVL (159 aa)) folds into the Obg domain. Residues 120–146 (GGHHGLGNTRFKSSTNRAPRQTTKGTV) are disordered. Polar residues predominate over residues 129–144 (RFKSSTNRAPRQTTKG). An OBG-type G domain is found at 160 to 333 (ADVGLLGLPN…LCLDLMTALD (174 aa)). Residues 166–173 (GLPNAGKS), 191–195 (FTTLV), 213–216 (DIPG), 283–286 (NKTD), and 314–316 (SAI) each bind GTP. Serine 173 and threonine 193 together coordinate Mg(2+).

The protein belongs to the TRAFAC class OBG-HflX-like GTPase superfamily. OBG GTPase family. In terms of assembly, monomer. Mg(2+) is required as a cofactor.

Its subcellular location is the cytoplasm. Functionally, an essential GTPase which binds GTP, GDP and possibly (p)ppGpp with moderate affinity, with high nucleotide exchange rates and a fairly low GTP hydrolysis rate. Plays a role in control of the cell cycle, stress response, ribosome biogenesis and in those bacteria that undergo differentiation, in morphogenesis control. This is GTPase Obg from Marinomonas sp. (strain MWYL1).